A 348-amino-acid chain; its full sequence is [FeFe] hydrogenase maturase subunit HydE (348 aa).

The Radical SAM core domain occupies 49–268 (DEVHIRAIIE…LLPDSNIPAT (220 aa)). 3 residues coordinate [4Fe-4S] cluster: Cys63, Cys67, and Cys70. 3 residues coordinate [2Fe-2S] cluster: Cys311, Cys319, and Cys322.

Belongs to the radical SAM superfamily. HydE family. Monomer. [4Fe-4S] cluster is required as a cofactor. [2Fe-2S] cluster serves as cofactor.

Its function is as follows. Required for the maturation of the [FeFe]-hydrogenase HydA. Catalyzes the reductive cleavage of S-adenosyl-L-methionine (in vitro), suggesting it may contribute to the biosynthesis of an essential sulfur-containing ligand that binds to the hydrogenase active site [2Fe-2S] cluster. The polypeptide is [FeFe] hydrogenase maturase subunit HydE (Thermotoga maritima (strain ATCC 43589 / DSM 3109 / JCM 10099 / NBRC 100826 / MSB8)).